A 129-amino-acid chain; its full sequence is Glycine cleavage system H protein (129 aa).

The region spanning 24-106 (TYTVGITEHA…YTDGWIFKIK (83 aa)) is the Lipoyl-binding domain. N6-lipoyllysine is present on Lys65.

It belongs to the GcvH family. The glycine cleavage system is composed of four proteins: P, T, L and H. (R)-lipoate is required as a cofactor.

The glycine cleavage system catalyzes the degradation of glycine. The H protein shuttles the methylamine group of glycine from the P protein to the T protein. This is Glycine cleavage system H protein from Klebsiella pneumoniae subsp. pneumoniae (strain ATCC 700721 / MGH 78578).